Here is a 457-residue protein sequence, read N- to C-terminus: Protein translocase subunit SecY (457 aa).

The Cytoplasmic portion of the chain corresponds to Met-1–Pro-20. The chain crosses the membrane as a helical span at residues Glu-21–Pro-47. At Leu-48 to Gln-59 the chain is on the extracellular side. Residues Val-60–Phe-67 constitute an intramembrane region (helical). Residues Val-60–Ile-88 traverse the membrane as a discontinuously helical segment. An intramembrane segment occupies Ala-68–Ile-79. An intramembrane region (helical) is located at residues Gly-80–Ile-88. Topologically, residues Ile-89–Arg-109 are cytoplasmic. The chain crosses the membrane as a helical span at residues Lys-110 to Gly-134. Topologically, residues Arg-135–Pro-146 are extracellular. A helical membrane pass occupies residues Leu-147 to Gln-171. At Lys-172–Ser-178 the chain is on the cytoplasmic side. A helical transmembrane segment spans residues Ala-179–Phe-197. Topologically, residues Gly-198–Pro-229 are extracellular. The chain crosses the membrane as a helical span at residues Asp-230–Arg-251. Residues Val-252–Thr-276 lie on the Cytoplasmic side of the membrane. The chain crosses the membrane as a helical span at residues Asn-277–Ala-298. Topologically, residues Asp-299–Val-332 are extracellular. Residues Lys-333–Trp-352 form a helical membrane-spanning segment. At Val-353–Leu-395 the chain is on the cytoplasmic side. A helical membrane pass occupies residues Thr-396–Gly-414. Residues Ala-415–Gly-417 are Extracellular-facing. Residues Thr-418 to Tyr-432 form a helical membrane-spanning segment. Over Tyr-433–Val-457 the chain is Cytoplasmic.

The protein belongs to the SecY/SEC61-alpha family. Component of the Sec protein translocase complex. Heterotrimer consisting of alpha (SecY), beta (SecG) and gamma (SecE) subunits. The heterotrimers can form oligomers, although 1 heterotrimer is thought to be able to translocate proteins. Interacts with the ribosome. May interact with SecDF, and other proteins may be involved.

The protein localises to the cell membrane. Functionally, the central subunit of the protein translocation channel SecYEG. Consists of two halves formed by TMs 1-5 and 6-10. These two domains form a lateral gate at the front which open onto the bilayer between TMs 2 and 7, and are clamped together by SecE at the back. The channel is closed by both a pore ring composed of hydrophobic SecY resides and a short helix (helix 2A) on the extracellular side of the membrane which forms a plug. The plug probably moves laterally to allow the channel to open. The ring and the pore may move independently. The chain is Protein translocase subunit SecY from Aeropyrum pernix (strain ATCC 700893 / DSM 11879 / JCM 9820 / NBRC 100138 / K1).